Here is a 456-residue protein sequence, read N- to C-terminus: MDIKTLKGFKDYLPKDSLIRIHIVRQIFSVLNSYNFDLIDTPVLEYSDLLLKKSGDETEKQIYRFKDNGGRDVSMRFDLTVPFARFVATNISALKLPFRRSQFGKVFRGENSQKGRYREFMQFDFDIVGEDTFRGDAEILSVVYYGLEEIFLNFIEGINKKFIIHYSHIGILNSFFEKLGLKEKSIFILRNIDKIDKIGIDKVKEALLLEIEKEAVDSILSLVSLQGTFKDKIQALKSILGDNESIKRVEDVFQHLSLLKIQDSFNLNLKISRGLDYYTGIVFESEVFGSNMGSVCSGGRYDNLVSSFSNSIQKISGVGGSFGVDRIKDIIDLEKFSYIKIFVTKARSKVLIVNLDSALQNYYYELATRFRNHDYSKVKNISCEVYFKNKNGKNIKEQIEYALSKEIRFLVFVGQEEYKENKMKVRDLTKKEELLLSFEESINLIKCNEKLLCTPF.

The protein belongs to the class-II aminoacyl-tRNA synthetase family. Homodimer.

It localises to the cytoplasm. The enzyme catalyses tRNA(His) + L-histidine + ATP = L-histidyl-tRNA(His) + AMP + diphosphate + H(+). The protein is Histidine--tRNA ligase (hisS) of Borreliella burgdorferi (strain ATCC 35210 / DSM 4680 / CIP 102532 / B31) (Borrelia burgdorferi).